The following is a 190-amino-acid chain: Cytidylate kinase (190 aa).

7–15 is an ATP binding site; sequence GKIGSGKST.

The protein belongs to the cytidylate kinase family. Type 2 subfamily.

It localises to the cytoplasm. The enzyme catalyses CMP + ATP = CDP + ADP. It catalyses the reaction dCMP + ATP = dCDP + ADP. The sequence is that of Cytidylate kinase from Thermoplasma volcanium (strain ATCC 51530 / DSM 4299 / JCM 9571 / NBRC 15438 / GSS1).